A 273-amino-acid chain; its full sequence is MYSANPTLGYYVPPLDVNNLTDQQTAISIEHLSLYYQQSRALSDISMRIPKGQVTAFIGPSGCGKSTLLRCINRMNDLVEGTRVEGEVKLHGKNIYHPDVDVPTLRRRVGMVFQRPNPFPKSIYENVVYGLRLQGIKNSRALDDAAEQSLRAAALWDEVKHRLHENAFGLSGGQQQRLVIARAIAIEPEVLLLDEPTSALDPISTLTIEELIHDLKTKYTVVIVTHNMQQAARVSDHTAFIHMGKLIEYADTDSIFTSPLKKQTEDYITGRYG.

Positions 27 to 268 (ISIEHLSLYY…PLKKQTEDYI (242 aa)) constitute an ABC transporter domain. 59–66 (GPSGCGKS) lines the ATP pocket.

Belongs to the ABC transporter superfamily. Phosphate importer (TC 3.A.1.7) family. As to quaternary structure, the complex is composed of two ATP-binding proteins (PstB), two transmembrane proteins (PstC and PstA) and a solute-binding protein (PstS).

The protein localises to the cell inner membrane. The catalysed reaction is phosphate(out) + ATP + H2O = ADP + 2 phosphate(in) + H(+). Part of the ABC transporter complex PstSACB involved in phosphate import. Responsible for energy coupling to the transport system. This Vibrio cholerae serotype O1 (strain ATCC 39315 / El Tor Inaba N16961) protein is Phosphate import ATP-binding protein PstB 1.